We begin with the raw amino-acid sequence, 207 residues long: Guanylate kinase (207 aa).

The 181-residue stretch at 17–197 (GRLVVLAGPS…SCDELVSLLV (181 aa)) folds into the Guanylate kinase-like domain. 24–31 (GPSAVGKS) contacts ATP.

The protein belongs to the guanylate kinase family.

The protein resides in the cytoplasm. It carries out the reaction GMP + ATP = GDP + ADP. Functionally, essential for recycling GMP and indirectly, cGMP. The chain is Guanylate kinase from Rhodococcus jostii (strain RHA1).